We begin with the raw amino-acid sequence, 403 residues long: S-adenosylmethionine synthase (403 aa).

Position 16 (H16) interacts with ATP. D18 contributes to the Mg(2+) binding site. A K(+)-binding site is contributed by E44. 2 residues coordinate L-methionine: E57 and Q110. Residues 110-120 (QSAHIAQGVDA) form a flexible loop region. Residues 175 to 177 (DSK), D253, 259 to 260 (RK), A276, and K280 each bind ATP. Residue D253 coordinates L-methionine. K284 is a binding site for L-methionine.

This sequence belongs to the AdoMet synthase family. In terms of assembly, homotetramer; dimer of dimers. Requires Mg(2+) as cofactor. It depends on K(+) as a cofactor.

It localises to the cytoplasm. The catalysed reaction is L-methionine + ATP + H2O = S-adenosyl-L-methionine + phosphate + diphosphate. It participates in amino-acid biosynthesis; S-adenosyl-L-methionine biosynthesis; S-adenosyl-L-methionine from L-methionine: step 1/1. Catalyzes the formation of S-adenosylmethionine (AdoMet) from methionine and ATP. The overall synthetic reaction is composed of two sequential steps, AdoMet formation and the subsequent tripolyphosphate hydrolysis which occurs prior to release of AdoMet from the enzyme. The protein is S-adenosylmethionine synthase of Erythrobacter litoralis (strain HTCC2594).